A 1052-amino-acid chain; its full sequence is RTX-III toxin determinant A from serotype 8 (1052 aa).

The next 3 membrane-spanning stretches (helical) occupy residues 248–265, 275–334, and 372–418; these read GLDI…SFAL, KVAA…LRVA, and DASI…GILE. Hemolysin-type calcium-binding repeat units lie at residues 744 to 761, 762 to 779, 780 to 797, 798 to 815, 826 to 843, and 844 to 861; these read KGSK…DDLL, NGND…NDEL, RGDN…NDKL, LGGN…NDEL, RGGK…SDLL, and DGGE…SDFY.

It belongs to the RTX prokaryotic toxin (TC 1.C.11) family. Post-translationally, palmitoylated by ApxIIIC. The toxin only becomes active when modified.

Its subcellular location is the secreted. It localises to the host cell membrane. Its function is as follows. Does not have hemolytic activity but shows a strong cytotoxicity towards alveolar macrophages and neutrophils. In Actinobacillus pleuropneumoniae (Haemophilus pleuropneumoniae), this protein is RTX-III toxin determinant A from serotype 8 (apxIIIA).